Here is a 268-residue protein sequence, read N- to C-terminus: Interferon alpha/beta receptor 2 (268 aa).

The N-terminal stretch at 1-16 (MGPWTLLLLHLPLVVS) is a signal peptide. Over 17–223 (MLPAPTNVSI…TSPTAANTVP (207 aa)) the chain is Extracellular. 2 consecutive Fibronectin type-III domains span residues 18–114 (LPAP…LTDT) and 115–217 (LLGP…TSPT). Disulfide bonds link C65–C74 and C191–C211. Residues 224 to 244 (VVLSVLCAFSLLVVLLCGIVV) form a helical membrane-spanning segment. Residues 245 to 268 (YSGRLLCMHKPLPKTLSSVPLCGG) are Cytoplasmic-facing.

The protein belongs to the type II cytokine receptor family. Heterodimer with IFNAR1; forming the receptor for type I interferon.

Its subcellular location is the cell membrane. It localises to the cytoplasm. In terms of biological role, together with IFNAR1, forms the heterodimeric receptor for type I interferons (including interferons alpha, beta, epsilon, omega and kappa). Type I interferon binding activates the JAK-STAT signaling cascade, resulting in transcriptional activation or repression of interferon-regulated genes that encode the effectors of the interferon response. Mechanistically, type I interferon-binding brings the IFNAR1 and IFNAR2 subunits into close proximity with one another, driving their associated Janus kinases (JAKs) (TYK2 bound to IFNAR1 and JAK1 bound to IFNAR2) to cross-phosphorylate one another. The activated kinases phosphorylate specific tyrosine residues on the intracellular domains of IFNAR1 and IFNAR2, forming docking sites for the STAT transcription factors (STAT1, STAT2 and STAT). STAT proteins are then phosphorylated by the JAKs, promoting their translocation into the nucleus to regulate expression of interferon-regulated genes. In Oncorhynchus mykiss (Rainbow trout), this protein is Interferon alpha/beta receptor 2.